Consider the following 162-residue polypeptide: Glutathione peroxidase-like peroxiredoxin GPX5 (162 aa).

C38 carries the post-translational modification S-selanylcysteine. The active site involves N87.

It belongs to the glutathione peroxidase family. Cys-87 is S-selanylated when selenium levels are high. S-selanylation may increase or be important for glutathione peroxidase activity.

The protein localises to the cytoplasm. It catalyses the reaction 2 glutathione + H2O2 = glutathione disulfide + 2 H2O. The catalysed reaction is a hydroperoxide + [thioredoxin]-dithiol = an alcohol + [thioredoxin]-disulfide + H2O. Has thioredoxin peroxidase activity. May also have glutathione peroxidase activity, although this activity is controversial. Protects cells against reactive oxygen species, which may include photooxidative stress, hydrogen peroxide and organic hydroperoxides. In Chlamydomonas reinhardtii (Chlamydomonas smithii), this protein is Glutathione peroxidase-like peroxiredoxin GPX5.